The chain runs to 317 residues: Ribosomal RNA small subunit methyltransferase H (317 aa).

Residues glycine 30–histidine 32, aspartate 50, tyrosine 74, aspartate 95, and glutamine 102 each bind S-adenosyl-L-methionine.

It belongs to the methyltransferase superfamily. RsmH family.

The protein resides in the cytoplasm. It catalyses the reaction cytidine(1402) in 16S rRNA + S-adenosyl-L-methionine = N(4)-methylcytidine(1402) in 16S rRNA + S-adenosyl-L-homocysteine + H(+). Its function is as follows. Specifically methylates the N4 position of cytidine in position 1402 (C1402) of 16S rRNA. The sequence is that of Ribosomal RNA small subunit methyltransferase H from Nitrosomonas europaea (strain ATCC 19718 / CIP 103999 / KCTC 2705 / NBRC 14298).